Consider the following 427-residue polypeptide: Septin-6 (427 aa).

An N-acetylalanine modification is found at Ala-2. Ser-27 carries the post-translational modification Phosphoserine. The Septin-type G domain occupies 39–305; sequence QGFCFNILCV…ELYRRCKLEE (267 aa). Positions 49 to 56 are G1 motif; that stretch reads GETGLGKS. GTP-binding positions include 49 to 56, Gly-104, 185 to 193, Gly-239, and Arg-254; these read GETGLGKS and KSDAISKSE. Residues 101-104 are G3 motif; it reads STVG. The segment at 184–187 is G4 motif; the sequence is AKSD. Residues 321–416 adopt a coiled-coil conformation; that stretch reads QETYEAKRNE…QSQGSQAGGS (96 aa). The residue at position 367 (Lys-367) is an N6-acetyllysine. The tract at residues 405-427 is disordered; it reads LLQSQGSQAGGSQTLKRDKEKKN. Residues 407-417 are compositionally biased toward low complexity; sequence QSQGSQAGGSQ. Residue Ser-416 is modified to Phosphoserine. Thr-418 is modified (phosphothreonine).

Belongs to the TRAFAC class TrmE-Era-EngA-EngB-Septin-like GTPase superfamily. Septin GTPase family. Septins polymerize into heterooligomeric protein complexes that form filaments, and associate with cellular membranes, actin filaments and microtubules. GTPase activity is required for filament formation. Filaments are assembled from asymmetrical heterotrimers, composed of SEPTIN2, SEPTIN6 and SEPTIN7 that associate head-to-head to form a hexameric unit. Within the trimer, directly interacts with SEPTIN2 and SEPTIN7. Also interacts with SEPTIN9 and SEPTIN12. Interaction with SEPTIN12 alters filament structure. Component of a septin core octameric complex consisting of SEPTIN12, SEPTIN7, SEPTIN6 and SEPTIN2 or SEPTIN4 in the order 12-7-6-2-2-6-7-12 or 12-7-6-4-4-6-7-12 and located in the sperm annulus. Interacts with SOCS7. Interacts with HNRNPA1.

The protein resides in the cytoplasm. Its subcellular location is the cytoskeleton. The protein localises to the spindle. It is found in the chromosome. It localises to the centromere. The protein resides in the kinetochore. Its subcellular location is the cleavage furrow. The protein localises to the midbody. It is found in the cell projection. It localises to the cilium. The protein resides in the flagellum. Functionally, filament-forming cytoskeletal GTPase. Required for normal organization of the actin cytoskeleton. Involved in cytokinesis. Forms a filamentous structure with SEPTIN12, SEPTIN6, SEPTIN2 and probably SEPTIN4 at the sperm annulus which is required for the structural integrity and motility of the sperm tail during postmeiotic differentiation. This Bos taurus (Bovine) protein is Septin-6.